A 179-amino-acid polypeptide reads, in one-letter code: Transcription factor BOA15 (179 aa).

Its subcellular location is the nucleus. In terms of biological role, transcription factor that probably coregulates the gene clusters that mediates the biosynthesis of botcinin acid and its botcinin derivatives, acetate-derived polyketides that contribute to virulence when combined with the sesquiterpene botrydial. Botcinin acid and its derivatives have been shown to induce chlorosis and necrosis during host plant infection, but also have antifungal activities. In Botryotinia fuckeliana (strain B05.10) (Noble rot fungus), this protein is Transcription factor BOA15.